We begin with the raw amino-acid sequence, 330 residues long: Glycerol-3-phosphate dehydrogenase [NAD(P)+] (330 aa).

NADPH-binding residues include W11, R31, H32, and K105. Residues K105 and G133 each coordinate sn-glycerol 3-phosphate. A137 is an NADPH binding site. The sn-glycerol 3-phosphate site is built by K188, D241, S251, R252, and N253. K188 functions as the Proton acceptor in the catalytic mechanism. R252 contributes to the NADPH binding site. Residues L277 and E279 each contribute to the NADPH site.

Belongs to the NAD-dependent glycerol-3-phosphate dehydrogenase family.

Its subcellular location is the cytoplasm. It carries out the reaction sn-glycerol 3-phosphate + NAD(+) = dihydroxyacetone phosphate + NADH + H(+). The enzyme catalyses sn-glycerol 3-phosphate + NADP(+) = dihydroxyacetone phosphate + NADPH + H(+). It functions in the pathway membrane lipid metabolism; glycerophospholipid metabolism. In terms of biological role, catalyzes the reduction of the glycolytic intermediate dihydroxyacetone phosphate (DHAP) to sn-glycerol 3-phosphate (G3P), the key precursor for phospholipid synthesis. This chain is Glycerol-3-phosphate dehydrogenase [NAD(P)+], found in Orientia tsutsugamushi (strain Boryong) (Rickettsia tsutsugamushi).